An 829-amino-acid chain; its full sequence is Conserved oligomeric Golgi complex subunit 5 (829 aa).

A Phosphoserine modification is found at Ser-166.

Belongs to the COG5 family. As to quaternary structure, component of the conserved oligomeric Golgi complex which is composed of eight different subunits and is required for normal Golgi morphology and localization.

The protein localises to the cytoplasm. Its subcellular location is the cytosol. The protein resides in the golgi apparatus membrane. Functionally, required for normal Golgi function. In Mus musculus (Mouse), this protein is Conserved oligomeric Golgi complex subunit 5 (Cog5).